Here is a 510-residue protein sequence, read N- to C-terminus: NAD(P)H-quinone oxidoreductase subunit 2 B, chloroplastic (510 aa).

Helical transmembrane passes span 24–44 (LLLFQGSSIFPECILIFGLIL), 59–79 (WFYFISSTSLVISITALLFRW), 99–119 (IFQFLILLCSTLCIPLSVEYI), 124–144 (MAITEFLLFVLTATLGGMFLC), 149–169 (LITIFVAPECFSLCSYLLSGY), 183–203 (YLLMGGASSSILVHGFSWLYG), 229–249 (ISIALISITVGLGFKLSPAPF), 295–315 (WHLLLEILAILSMILGNLLAI), 323–343 (MLAYSSIGQIGYVIIGIIVGD), 354–374 (YMLFYISMNLGTFACIVLFGL), 395–415 (ALSLALCLLSLGGLPPLAGFF), and 418–438 (LYLFWCGWQAGLYLLVSIGLL).

The protein belongs to the complex I subunit 2 family. As to quaternary structure, NDH is composed of at least 16 different subunits, 5 of which are encoded in the nucleus.

Its subcellular location is the plastid. It is found in the chloroplast thylakoid membrane. The enzyme catalyses a plastoquinone + NADH + (n+1) H(+)(in) = a plastoquinol + NAD(+) + n H(+)(out). The catalysed reaction is a plastoquinone + NADPH + (n+1) H(+)(in) = a plastoquinol + NADP(+) + n H(+)(out). Its function is as follows. NDH shuttles electrons from NAD(P)H:plastoquinone, via FMN and iron-sulfur (Fe-S) centers, to quinones in the photosynthetic chain and possibly in a chloroplast respiratory chain. The immediate electron acceptor for the enzyme in this species is believed to be plastoquinone. Couples the redox reaction to proton translocation, and thus conserves the redox energy in a proton gradient. This Agrostis stolonifera (Creeping bentgrass) protein is NAD(P)H-quinone oxidoreductase subunit 2 B, chloroplastic.